The chain runs to 777 residues: Cyclin-F (777 aa).

The Nuclear localization signal 1 motif lies at 20–28; it reads KRRIKRRPR. Residues 29-76 enclose the F-box domain; the sequence is NLTILSLPEDVLFHILKWLSVGDILAVRAVHSHLKYLVDNHASVWASA. Positions 288–405 constitute a Cyclin N-terminal domain; sequence QASQAVNKQQ…EIISALEGKI (118 aa). 3 short sequence motifs (d box) span residues 310–313, 343–346, and 349–352; these read RYIL, RRRL, and RYKL. Disordered regions lie at residues 544–591 and 651–777; these read QESP…TPTA and QESS…HLAS. The short motif at 568–574 is the Nuclear localization signal 2 element; it reads RRSKRKR. Residues 582–761 form a PEST region; the sequence is RGSFVTTPTA…ESGVHQQPVK (180 aa). Composition is skewed to low complexity over residues 695 to 708 and 719 to 731; these read SGYS…PISS and STSV…HSST. Over residues 751 to 767 the composition is skewed to polar residues; that stretch reads PESGVHQQPVKRQNLSV. A D box 4 motif is present at residues 762–765; it reads RQNL. Positions 768-777 are enriched in basic and acidic residues; the sequence is HSDKDMHLAS.

It belongs to the cyclin family. Cyclin AB subfamily. As to quaternary structure, component of the SCF(CCNF) complex consisting of CUL1, RBX1, SKP1 and CCNF. Interacts with SKP1. Interacts with CUL1. Interacts with CCNB1; interaction is required for nuclear localization of CCNB1. Interacts with CCP110; this interaction leads to CCP110 ubiquitination and degradation via the proteasome pathway. Interacts (via the Cyclin N-terminal domain) with MYBL2/BMYB. Interacts with FZR1/CDH1 (via N-terminus). Interacts with RRM2 (via Cy motif and when phosphorylated at 'Thr-33'); the interaction occurs exclusively in G2 and early M. Interacts with CDC6 (via Cy motif); the interaction takes place during G2 and M phase. Post-translationally, degraded when the spindle assembly checkpoint is activated during the G2-M transition. Degradation is not dependent on the proteasome or ubiquitin and depends on the C-terminal PEST sequence. In terms of processing, phosphorylated just before cells enter into mitosis. Ubiquitinated by the anaphase-promoting complex (APC/C); leading to its degradation by the proteasome.

The protein localises to the nucleus. It is found in the cytoplasm. The protein resides in the perinuclear region. Its subcellular location is the cytoskeleton. It localises to the microtubule organizing center. The protein localises to the centrosome. It is found in the centriole. Substrate recognition component of a SCF (SKP1-CUL1-F-box protein) E3 ubiquitin-protein ligase complex which mediates the ubiquitination and subsequent proteasomal degradation of target proteins. The SCF(CCNF) E3 ubiquitin-protein ligase complex is an integral component of the ubiquitin proteasome system (UPS) and links proteasome degradation to the cell cycle. Mediates the substrate recognition and the proteasomal degradation of various target proteins involved in the regulation of cell cycle progression and in the maintenance of genome stability. Mediates the ubiquitination and subsequent proteasomal degradation of CP110 during G2 phase, thereby acting as an inhibitor of centrosome reduplication. In G2, mediates the ubiquitination and proteasomal degradation of CDC6, thereby suppressing DNA re-replication and preventing genome instability. Involved in the ubiquitination and degradation of the substrate adapter CDH1 of the anaphase-promoting complex (APC/C), thereby acting as an antagonist of APC/C in regulating G1 progression and S phase entry. May play a role in the G2 cell cycle checkpoint control after DNA damage, possibly by promoting the ubiquitination of MYBL2/BMYB. This Mus musculus (Mouse) protein is Cyclin-F (Ccnf).